A 1207-amino-acid polypeptide reads, in one-letter code: ATP-dependent helicase/nuclease subunit A (1207 aa).

The region spanning 2–472 is the UvrD-like helicase ATP-binding domain; that stretch reads PQFTKEQQQA…ILLSDNFRST (471 aa). 23 to 30 provides a ligand contact to ATP; the sequence is ASAGSGKT. Residues 492–783 form the UvrD-like helicase C-terminal domain; the sequence is GGIDYSKEGQ…RLMTIHGSKG (292 aa).

This sequence belongs to the helicase family. AddA subfamily. Heterodimer of AddA and AddB/RexB. The cofactor is Mg(2+).

It carries out the reaction Couples ATP hydrolysis with the unwinding of duplex DNA by translocating in the 3'-5' direction.. The enzyme catalyses ATP + H2O = ADP + phosphate + H(+). In terms of biological role, the heterodimer acts as both an ATP-dependent DNA helicase and an ATP-dependent, dual-direction single-stranded exonuclease. Recognizes the chi site generating a DNA molecule suitable for the initiation of homologous recombination. The AddA nuclease domain is required for chi fragment generation; this subunit has the helicase and 3' -&gt; 5' nuclease activities. This is ATP-dependent helicase/nuclease subunit A from Lactobacillus acidophilus (strain ATCC 700396 / NCK56 / N2 / NCFM).